The following is an 87-amino-acid chain: Small ribosomal subunit protein bS20 (87 aa).

The protein belongs to the bacterial ribosomal protein bS20 family.

In terms of biological role, binds directly to 16S ribosomal RNA. The sequence is that of Small ribosomal subunit protein bS20 from Lachnoclostridium phytofermentans (strain ATCC 700394 / DSM 18823 / ISDg) (Clostridium phytofermentans).